The chain runs to 49 residues: Large ribosomal subunit protein bL33A (49 aa).

A disordered region spans residues Lys-21–Lys-49. Positions Asn-25–Lys-49 are enriched in basic and acidic residues.

The protein belongs to the bacterial ribosomal protein bL33 family.

This chain is Large ribosomal subunit protein bL33A, found in Staphylococcus epidermidis (strain ATCC 35984 / DSM 28319 / BCRC 17069 / CCUG 31568 / BM 3577 / RP62A).